The chain runs to 495 residues: Flagellin (495 aa).

The protein belongs to the bacterial flagellin family.

The protein resides in the secreted. It is found in the bacterial flagellum. Functionally, flagellin is the subunit protein which polymerizes to form the filaments of bacterial flagella. This chain is Flagellin (fliC), found in Salmonella typhimurium (strain LT2 / SGSC1412 / ATCC 700720).